The chain runs to 295 residues: 4-diphosphocytidyl-2-C-methyl-D-erythritol kinase (295 aa).

Lys18 is a catalytic residue. 101–111 (PMGGGIGGGSS) contacts ATP. Asp143 is a catalytic residue.

It belongs to the GHMP kinase family. IspE subfamily.

The catalysed reaction is 4-CDP-2-C-methyl-D-erythritol + ATP = 4-CDP-2-C-methyl-D-erythritol 2-phosphate + ADP + H(+). Its pathway is isoprenoid biosynthesis; isopentenyl diphosphate biosynthesis via DXP pathway; isopentenyl diphosphate from 1-deoxy-D-xylulose 5-phosphate: step 3/6. Functionally, catalyzes the phosphorylation of the position 2 hydroxy group of 4-diphosphocytidyl-2C-methyl-D-erythritol. In Vibrio cholerae serotype O1 (strain ATCC 39315 / El Tor Inaba N16961), this protein is 4-diphosphocytidyl-2-C-methyl-D-erythritol kinase.